Here is a 163-residue protein sequence, read N- to C-terminus: Leptin (163 aa).

Residues 1–18 form the signal peptide; that stretch reads MCWRPLCRLWSYLVYVQA. Cysteines 113 and 163 form a disulfide.

It belongs to the leptin family. As to expression, not exclusively localized in adipose tissue but is also expressed in liver.

It is found in the secreted. Functionally, key player in the regulation of energy balance and body weight control. Once released into the circulation, has central and peripheral effects by binding LEPR, found in many tissues, which results in the activation of several major signaling pathways. In Gallus gallus (Chicken), this protein is Leptin (LEP).